The sequence spans 289 residues: 33 kDa chaperonin (289 aa).

Intrachain disulfides connect C225/C227 and C258/C261.

The protein belongs to the HSP33 family. Under oxidizing conditions two disulfide bonds are formed involving the reactive cysteines. Under reducing conditions zinc is bound to the reactive cysteines and the protein is inactive.

It localises to the cytoplasm. Redox regulated molecular chaperone. Protects both thermally unfolding and oxidatively damaged proteins from irreversible aggregation. Plays an important role in the bacterial defense system toward oxidative stress. This is 33 kDa chaperonin from Nitrosococcus oceani (strain ATCC 19707 / BCRC 17464 / JCM 30415 / NCIMB 11848 / C-107).